The following is a 233-amino-acid chain: MSELVKISKTQFENVFQCEFNDGTVRLCTKNLAPGFSVYGERLFKVEGVEYREWNAFRSKLGGAILKGLKQNPIVKGTKVLYLGAASGTTPSHVSDIVELEGKVYGVEFSPRVVREFLLVAQHRPNLFPILADARFPQYYRTLVEDVDVLYVDIAQPDETDIAIYNAKFFLKNGGYMMMAIKARSIDVTKEPTEIYEMEVNKLKENNFDVIQVIQLDPYDKDHAMVLAKYKGK.

S-adenosyl-L-methionine-binding positions include 89 to 90 (TT), 108 to 109 (EF), 133 to 134 (DA), and 153 to 156 (DIAQ).

It belongs to the methyltransferase superfamily. Fibrillarin family. Interacts with nop5. Component of box C/D small ribonucleoprotein (sRNP) particles that contain rpl7ae, FlpA and nop5, plus a guide RNA.

Involved in pre-rRNA and tRNA processing. Utilizes the methyl donor S-adenosyl-L-methionine to catalyze the site-specific 2'-hydroxyl methylation of ribose moieties in rRNA and tRNA. Site specificity is provided by a guide RNA that base pairs with the substrate. Methylation occurs at a characteristic distance from the sequence involved in base pairing with the guide RNA. This chain is Fibrillarin-like rRNA/tRNA 2'-O-methyltransferase, found in Sulfurisphaera tokodaii (strain DSM 16993 / JCM 10545 / NBRC 100140 / 7) (Sulfolobus tokodaii).